Consider the following 350-residue polypeptide: MKNKKRVLIASSLSCAILLLSAATTQANSAHKDSQDQNKKEHVDKSQQKEKRNVTNKDKNSTVPDDIGKNGKITKRTETVYDEKTNILQNLQFDFIDDPTYDKNVLLVKKQGSIHSNLKFESHKEEKNSNWLKYPSEYHVDFQVKRNPKTEILDQLPKNKISTAKVDSTFSYSSGGKFDSTKGIGRTSSNSYSKTISYNQQNYDTIASGKNNNWHVHWSVIANDLKYGGEVKNRNDELLFYRNTRIATVENPELSFASKYRYPALVRSGFNPEFLTYLSNEKSNEKTQFEVTYTRNQDILKNRPGIHYAPPILEKNKEGQRLIVTYEVDWKNKTVKVVDKYSDNKSFREG.

The first 27 residues, 1 to 27 (MKNKKRVLIASSLSCAILLLSAATTQA), serve as a signal peptide directing secretion. Residues 28–71 (NSAHKDSQDQNKKEHVDKSQQKEKRNVTNKDKNSTVPDDIGKNG) form a disordered region. The span at 30 to 60 (AHKDSQDQNKKEHVDKSQQKEKRNVTNKDKN) shows a compositional bias: basic and acidic residues.

It belongs to the aerolysin family.

This is an uncharacterized protein from Staphylococcus aureus (strain MSSA476).